Consider the following 677-residue polypeptide: Threonine--tRNA ligase (677 aa).

The TGS domain maps to 1 to 59 (MAQATISITVNGEAKEVEATTTGVELFAEDKNIIAVKINGENRDLYTPLNDGDTVDPIA). Residues 255-561 (DHRKLGAEMD…LLEHYAGAFP (307 aa)) are catalytic. 3 residues coordinate Zn(2+): Cys-360, His-411, and His-538.

It belongs to the class-II aminoacyl-tRNA synthetase family. In terms of assembly, homodimer. Zn(2+) is required as a cofactor.

The protein localises to the cytoplasm. The enzyme catalyses tRNA(Thr) + L-threonine + ATP = L-threonyl-tRNA(Thr) + AMP + diphosphate + H(+). Catalyzes the attachment of threonine to tRNA(Thr) in a two-step reaction: L-threonine is first activated by ATP to form Thr-AMP and then transferred to the acceptor end of tRNA(Thr). Also edits incorrectly charged L-seryl-tRNA(Thr). The polypeptide is Threonine--tRNA ligase (Bifidobacterium longum (strain DJO10A)).